The following is a 256-amino-acid chain: Thiazole synthase (256 aa).

Lys96 serves as the catalytic Schiff-base intermediate with DXP. 1-deoxy-D-xylulose 5-phosphate-binding positions include Gly157, 184–185 (AG), and 206–207 (NT).

The protein belongs to the ThiG family. As to quaternary structure, homotetramer. Forms heterodimers with either ThiH or ThiS.

Its subcellular location is the cytoplasm. It carries out the reaction [ThiS sulfur-carrier protein]-C-terminal-Gly-aminoethanethioate + 2-iminoacetate + 1-deoxy-D-xylulose 5-phosphate = [ThiS sulfur-carrier protein]-C-terminal Gly-Gly + 2-[(2R,5Z)-2-carboxy-4-methylthiazol-5(2H)-ylidene]ethyl phosphate + 2 H2O + H(+). The protein operates within cofactor biosynthesis; thiamine diphosphate biosynthesis. In terms of biological role, catalyzes the rearrangement of 1-deoxy-D-xylulose 5-phosphate (DXP) to produce the thiazole phosphate moiety of thiamine. Sulfur is provided by the thiocarboxylate moiety of the carrier protein ThiS. In vitro, sulfur can be provided by H(2)S. This is Thiazole synthase from Brucella melitensis biotype 2 (strain ATCC 23457).